The chain runs to 89 residues: MVLSVNDRKEIMGKFQASAADTGSPAVQVALITERIKYLSGHLKANPKDFAGERGLTKLVGQRKRLLSYLKKKDFAKYTQVTKELNLRK.

This sequence belongs to the universal ribosomal protein uS15 family. As to quaternary structure, part of the 30S ribosomal subunit. Forms a bridge to the 50S subunit in the 70S ribosome, contacting the 23S rRNA.

In terms of biological role, one of the primary rRNA binding proteins, it binds directly to 16S rRNA where it helps nucleate assembly of the platform of the 30S subunit by binding and bridging several RNA helices of the 16S rRNA. Forms an intersubunit bridge (bridge B4) with the 23S rRNA of the 50S subunit in the ribosome. This Elusimicrobium minutum (strain Pei191) protein is Small ribosomal subunit protein uS15.